Consider the following 243-residue polypeptide: BTB/POZ domain-containing protein At4g08455 (243 aa).

Residues 19–51 adopt a coiled-coil conformation; it reads KECYVEAGETEEELKREIDDLKAKVAFLRLSSS. Residues 64-136 form the BTB domain; it reads TDVVLIASED…LYTAEACLDE (73 aa).

In terms of assembly, interacts with CUL3A and CUL3B.

The protein operates within protein modification; protein ubiquitination. May act as a substrate-specific adapter of an E3 ubiquitin-protein ligase complex (CUL3-RBX1-BTB) which mediates the ubiquitination and subsequent proteasomal degradation of target proteins. The chain is BTB/POZ domain-containing protein At4g08455 from Arabidopsis thaliana (Mouse-ear cress).